Here is a 390-residue protein sequence, read N- to C-terminus: Lipid-A-disaccharide synthase (390 aa).

Belongs to the LpxB family.

It carries out the reaction a lipid X + a UDP-2-N,3-O-bis[(3R)-3-hydroxyacyl]-alpha-D-glucosamine = a lipid A disaccharide + UDP + H(+). It participates in bacterial outer membrane biogenesis; LPS lipid A biosynthesis. Functionally, condensation of UDP-2,3-diacylglucosamine and 2,3-diacylglucosamine-1-phosphate to form lipid A disaccharide, a precursor of lipid A, a phosphorylated glycolipid that anchors the lipopolysaccharide to the outer membrane of the cell. In Paramagnetospirillum magneticum (strain ATCC 700264 / AMB-1) (Magnetospirillum magneticum), this protein is Lipid-A-disaccharide synthase.